The following is a 712-amino-acid chain: Cyclolysin secretion/processing ATP-binding protein CyaB (712 aa).

The Peptidase C39 domain occupies glutamine 7–cysteine 128. Residues isoleucine 157–glutamine 439 form the ABC transmembrane type-1 domain. 6 consecutive transmembrane segments (helical) span residues valine 160–valine 180, leucine 194–isoleucine 214, alanine 272–tyrosine 292, leucine 298–leucine 318, valine 367–isoleucine 387, and leucine 390–valine 410. The ABC transporter domain occupies isoleucine 471 to leucine 706. Glycine 505–serine 512 is a binding site for ATP.

The protein belongs to the ABC transporter superfamily. Cyclolysin exporter (TC 3.A.1.109.2) family.

Its subcellular location is the cell membrane. Involved in the export of calmodulin-sensitive adenylate cyclase-hemolysin (cyclolysin). The polypeptide is Cyclolysin secretion/processing ATP-binding protein CyaB (cyaB) (Bordetella pertussis (strain Tohama I / ATCC BAA-589 / NCTC 13251)).